The primary structure comprises 2698 residues: Zinc finger protein 292 (2698 aa).

Residues 567-589 form a C2H2-type 1 zinc finger; that stretch reads YSCPICAKNFNSKDSFVPHVTLH. Ser-654 carries the post-translational modification Phosphoserine. C2H2-type zinc fingers lie at residues 681–705, 722–744, 750–774, 779–803, 807–831, and 1085–1110; these read FNCP…VKGH, VICQ…LQMH, YICI…RKEH, AKCL…EAQH, YTCK…QDGH, and FSCQ…KTAH. Positions 822–834 are enriched in basic and acidic residues; the sequence is SEMEKHQDGHSHP. The interval 822-894 is disordered; it reads SEMEKHQDGH…AEPAVTKHGQ (73 aa). Lys-1104 carries the post-translational modification N6-acetyllysine. Phosphoserine is present on Ser-1146. Polar residues predominate over residues 1278 to 1325; that stretch reads NSTNHYPSQTDGNINSSFLKGGSSENGVFPSQVSSADDFSSTSAQPST. Residues 1278 to 1349 are disordered; the sequence is NSTNHYPSQT…KERKPKHNKR (72 aa). The C2H2-type 8; degenerate zinc-finger motif lies at 1361 to 1383; that stretch reads FICSRCYRAFTNPRSLGGHLSKR. Polar residues-rich tracts occupy residues 1574-1603 and 1624-1633; these read FSSS…TRSS and SVSNTSQNVL. Positions 1574–1656 are disordered; it reads FSSSTEPPQN…PVPDTNTRSD (83 aa). C2H2-type zinc fingers lie at residues 1879–1904 and 1924–1949; these read FVCQ…GKIH and FKCV…QLVH. The interval 1964–1997 is disordered; that stretch reads PYGRKSQSENLSSPQNNQVKKQPSMAEETKTESQ. The segment covering 1971–1984 has biased composition (polar residues); that stretch reads SENLSSPQNNQVKK. Lys-2020 is modified (N6-acetyllysine). Positions 2021 to 2032 are enriched in basic and acidic residues; it reads QLAEKKSPEKPE. Residues 2021 to 2075 form a disordered region; it reads QLAEKKSPEKPESSSQPVTSSAEQYNANLANLKTKGRKNKRHRKEKEEKREKNPV. A compositionally biased stretch (polar residues) spans 2038–2051; sequence VTSSAEQYNANLAN. The span at 2054–2064 shows a compositional bias: basic residues; sequence TKGRKNKRHRK. 4 C2H2-type zinc fingers span residues 2091 to 2116, 2149 to 2174, 2193 to 2218, and 2233 to 2258; these read YCCV…QAVH, FRCQ…MKLH, FPCD…EVDH, and YKCD…FNKH. Over residues 2262–2271 the composition is skewed to basic residues; the sequence is HKAHLIRPRK. Positions 2262–2323 are disordered; that stretch reads HKAHLIRPRK…KSNLENKSAK (62 aa). The segment at 2362-2386 adopts a C2H2-type 15 zinc-finger fold; the sequence is YPCMIKGCTSVVTSESNIIRHYKCH. Disordered stretches follow at residues 2411-2454, 2467-2553, and 2580-2608; these read GKEI…GEKD, LINE…EEHP, and KQKK…HVDK. Basic and acidic residues predominate over residues 2421–2437; that stretch reads KNDKKDPDSSVLEKNDN. The segment covering 2470–2488 has biased composition (polar residues); the sequence is EDSTNAENQGNTTLKGNNE. Basic and acidic residues-rich tracts occupy residues 2489 to 2501 and 2580 to 2590; these read FQEH…ERQK and KQKKNSDRDHS. The segment covering 2596–2606 has biased composition (basic residues); it reads RGSHSSSRRHV.

It belongs to the krueppel C2H2-type zinc-finger protein family. In terms of tissue distribution, expressed in postnatal day 1 (P1) pituitary. Also detected in presomatotrophic cell line GHFT1-5.

Its subcellular location is the nucleus. Functionally, may be involved in transcriptional regulation. In Mus musculus (Mouse), this protein is Zinc finger protein 292.